The primary structure comprises 293 residues: Elongation factor Ts (293 aa).

An involved in Mg(2+) ion dislocation from EF-Tu region spans residues 80–83; that stretch reads TDFV.

The protein belongs to the EF-Ts family.

The protein localises to the cytoplasm. Associates with the EF-Tu.GDP complex and induces the exchange of GDP to GTP. It remains bound to the aminoacyl-tRNA.EF-Tu.GTP complex up to the GTP hydrolysis stage on the ribosome. The protein is Elongation factor Ts of Aeromonas salmonicida (strain A449).